The following is a 381-amino-acid chain: UDP-N-acetylglucosamine--N-acetylmuramyl-(pentapeptide) pyrophosphoryl-undecaprenol N-acetylglucosamine transferase (381 aa).

UDP-N-acetyl-alpha-D-glucosamine contacts are provided by residues 10 to 12, asparagine 124, arginine 165, serine 207, isoleucine 263, and glutamine 308; that span reads TGG.

It belongs to the glycosyltransferase 28 family. MurG subfamily.

Its subcellular location is the cell inner membrane. It carries out the reaction di-trans,octa-cis-undecaprenyl diphospho-N-acetyl-alpha-D-muramoyl-L-alanyl-D-glutamyl-meso-2,6-diaminopimeloyl-D-alanyl-D-alanine + UDP-N-acetyl-alpha-D-glucosamine = di-trans,octa-cis-undecaprenyl diphospho-[N-acetyl-alpha-D-glucosaminyl-(1-&gt;4)]-N-acetyl-alpha-D-muramoyl-L-alanyl-D-glutamyl-meso-2,6-diaminopimeloyl-D-alanyl-D-alanine + UDP + H(+). It functions in the pathway cell wall biogenesis; peptidoglycan biosynthesis. In terms of biological role, cell wall formation. Catalyzes the transfer of a GlcNAc subunit on undecaprenyl-pyrophosphoryl-MurNAc-pentapeptide (lipid intermediate I) to form undecaprenyl-pyrophosphoryl-MurNAc-(pentapeptide)GlcNAc (lipid intermediate II). In Trichlorobacter lovleyi (strain ATCC BAA-1151 / DSM 17278 / SZ) (Geobacter lovleyi), this protein is UDP-N-acetylglucosamine--N-acetylmuramyl-(pentapeptide) pyrophosphoryl-undecaprenol N-acetylglucosamine transferase.